We begin with the raw amino-acid sequence, 334 residues long: Putative binding protein YtlA (334 aa).

The N-terminal stretch at 1-23 is a signal peptide; the sequence is MNRWLRLGFACVGSIFLMFALAA. Cys24 carries N-palmitoyl cysteine lipidation. A lipid anchor (S-diacylglycerol cysteine) is attached at Cys24.

It belongs to the bacterial solute-binding protein SsuA/TauA family.

The protein localises to the cell membrane. This chain is Putative binding protein YtlA (ytlA), found in Bacillus subtilis (strain 168).